The primary structure comprises 69 residues: Beta-defensin 1 (69 aa).

The N-terminal stretch at 1–21 (MKTHYFLLVMICFLFSQMEPG) is a signal peptide. A propeptide spanning residues 22–32 (VGILTSLGRRT) is cleaved from the precursor. Intrachain disulfides connect cysteine 37–cysteine 66, cysteine 44–cysteine 59, and cysteine 49–cysteine 67.

It belongs to the beta-defensin family. In terms of assembly, monomer. Homodimer. As to expression, detected in kidney.

Its subcellular location is the secreted. It localises to the membrane. Functionally, has bactericidal activity. May act as a ligand for C-C chemokine receptor CCR6. Positively regulates the sperm motility and bactericidal activity in a CCR6-dependent manner. Binds to CCR6 and triggers Ca2+ mobilization in the sperm which is important for its motility. The protein is Beta-defensin 1 (Defb1) of Mus musculus (Mouse).